The following is a 480-amino-acid chain: Acetylxylan esterase (480 aa).

The first 19 residues, 1–19, serve as a signal peptide directing secretion; that stretch reads MNRKLFMTGLLMLAMTMQA.

Belongs to the AB hydrolase superfamily.

The enzyme catalyses Deacetylation of xylans and xylo-oligosaccharides.. Its pathway is glycan degradation; xylan degradation. Functionally, involved in degradation of plant cell wall polysaccharides. Is an acetyl esterase with broad substrate specificity, releasing acetic acid from acetylated xylo-oligosaccharides and acetylated xylan as well as xylose-tetraacetate, 4-O-methylumbelliferyl acetate, glucose-pentaacetate, and cephalosporin C. Appears to have greater activity on oligosaccharides than on polymeric substrates. Is also able to release acetic acid from xylo-oligosaccharides with 4-O-methylglucuronic acid side groups proximally located to O-acetyl esters. Preferentially targets xylo-oligosaccharides possessing three or more O-acetyl groups, but following their depletion it is active on the less acetylated portion of the substrate. The protein is Acetylxylan esterase of Xylanibacter ruminicola (strain ATCC 19189 / DSM 19721 / CIP 105475 / JCM 8958 / 23) (Prevotella ruminicola).